Here is a 1164-residue protein sequence, read N- to C-terminus: DNA-directed RNA polymerase subunit beta' (1164 aa).

Positions 60, 62, 75, and 78 each coordinate Zn(2+). Asp449, Asp451, and Asp453 together coordinate Mg(2+). Zn(2+) contacts are provided by Cys776, Cys850, Cys857, and Cys860.

Belongs to the RNA polymerase beta' chain family. As to quaternary structure, the RNAP catalytic core consists of 2 alpha, 1 beta, 1 beta' and 1 omega subunit. When a sigma factor is associated with the core the holoenzyme is formed, which can initiate transcription. The cofactor is Mg(2+). Zn(2+) serves as cofactor.

It carries out the reaction RNA(n) + a ribonucleoside 5'-triphosphate = RNA(n+1) + diphosphate. Its function is as follows. DNA-dependent RNA polymerase catalyzes the transcription of DNA into RNA using the four ribonucleoside triphosphates as substrates. This Moorella thermoacetica (strain ATCC 39073 / JCM 9320) protein is DNA-directed RNA polymerase subunit beta'.